Reading from the N-terminus, the 273-residue chain is Trypsin-6 (273 aa).

The N-terminal stretch at 1–22 (MLSKFTAILLAVHIALFACALT) is a signal peptide. Positions 23–46 (QAEKRHKLTRPAFHPNAPYLAGKR) are cleaved as a propeptide — activation peptide. Residues 47–272 (IVGGFVIDIS…VRDWIRETSG (226 aa)) form the Peptidase S1 domain. The cysteines at positions 72 and 88 are disulfide-linked. Residues His87 and Asp132 each act as charge relay system in the active site. 2 disulfide bridges follow: Cys197–Cys213 and Cys224–Cys248. Ser228 (charge relay system) is an active-site residue.

It belongs to the peptidase S1 family. In terms of tissue distribution, expressed in the midgut. Expression levels drop a few hours after blood feeding and pick up again 28 hours later.

It is found in the secreted. The enzyme catalyses Preferential cleavage: Arg-|-Xaa, Lys-|-Xaa.. Its function is as follows. Constitutive trypsin that is expressed 2 days after emergence, coinciding with host seeking behavior of the female. The chain is Trypsin-6 (TRYP6) from Anopheles gambiae (African malaria mosquito).